The sequence spans 154 residues: Myoglobin (154 aa).

One can recognise a Globin domain in the interval 2-148; it reads GLSDGEWQLV…FRNDMAAKYK (147 aa). At Ser-4 the chain carries Phosphoserine. His-65 contributes to the nitrite binding site. O2 is bound at residue His-65. Thr-68 bears the Phosphothreonine mark. His-94 is a binding site for heme b.

It belongs to the globin family. In terms of assembly, monomeric.

It localises to the cytoplasm. It is found in the sarcoplasm. The catalysed reaction is Fe(III)-heme b-[protein] + nitric oxide + H2O = Fe(II)-heme b-[protein] + nitrite + 2 H(+). It catalyses the reaction H2O2 + AH2 = A + 2 H2O. Monomeric heme protein which primary function is to store oxygen and facilitate its diffusion within muscle tissues. Reversibly binds oxygen through a pentacoordinated heme iron and enables its timely and efficient release as needed during periods of heightened demand. Depending on the oxidative conditions of tissues and cells, and in addition to its ability to bind oxygen, it also has a nitrite reductase activity whereby it regulates the production of bioactive nitric oxide. Under stress conditions, like hypoxia and anoxia, it also protects cells against reactive oxygen species thanks to its pseudoperoxidase activity. The protein is Myoglobin (MB) of Didelphis virginiana (North American opossum).